We begin with the raw amino-acid sequence, 252 residues long: Phosphate import ATP-binding protein PstB 1 (252 aa).

The ABC transporter domain maps to 6 to 247; the sequence is LQVSDLSVYY…PQHKETEDYI (242 aa). 38-45 lines the ATP pocket; the sequence is GPSGSGKS.

Belongs to the ABC transporter superfamily. Phosphate importer (TC 3.A.1.7) family. As to quaternary structure, the complex is composed of two ATP-binding proteins (PstB), two transmembrane proteins (PstC and PstA) and a solute-binding protein (PstS).

It localises to the cell membrane. The catalysed reaction is phosphate(out) + ATP + H2O = ADP + 2 phosphate(in) + H(+). In terms of biological role, part of the ABC transporter complex PstSACB involved in phosphate import. Responsible for energy coupling to the transport system. The polypeptide is Phosphate import ATP-binding protein PstB 1 (Streptococcus pneumoniae (strain ATCC BAA-255 / R6)).